The chain runs to 193 residues: Interferon type A1/A2 (193 aa).

The N-terminal stretch at 1 to 31 is a signal peptide; it reads MAVPASPQHPRGYGILLLTLLLKALATTASA. Intrachain disulfides connect Cys32/Cys129, Cys61/Cys155, and Cys68/Cys168. N-linked (GlcNAc...) asparagine glycans are attached at residues Asn65, Asn71, Asn108, and Asn186.

This sequence belongs to the alpha/beta interferon family.

The protein resides in the secreted. Functionally, has antiviral activities. The protein is Interferon type A1/A2 (IFNA1) of Gallus gallus (Chicken).